The primary structure comprises 353 residues: MTARELVCSQRVGQGLSRRLRPLVLAVTLGVLVVTLSGCSWSDALAIGWPEGITPEAHLNRQLWIGAVVASLVVGVIVWGLIFWSTIFHRKKTTDTELPRQFGYNMPLELVLTVTPFLIISMLFYFTVIVQDKMLYLAKDPEVVIDVTAFQWNWKFGYQRVDFKDGTLTYDGVDPARKKAMVSKPEGKDSHGEELVGAVRGLNTEDRAYLNFDKVETLGTTTEIPVLVLPAGKRIEFQLNSADVVHSFWVPKFLFKRDVMPNPVANNSVNVFQVEEITKTGAFVGHCAEMCGTYHSMMNFEVRVVAPNDFKAYLQQRIDGKTNAEALQVIAQPPLAVTTHPFDTRRGQLTNSQ.

A signal peptide spans 1–42 (MTARELVCSQRVGQGLSRRLRPLVLAVTLGVLVVTLSGCSWS). The next 2 helical transmembrane spans lie at 63–83 (LWIGAVVASLVVGVIVWGLIF) and 110–130 (LVLTVTPFLIISMLFYFTVIV). Residues histidine 246, cysteine 287, cysteine 291, and histidine 295 each coordinate Cu cation.

Belongs to the cytochrome c oxidase subunit 2 family. Cu cation serves as cofactor. Heme is required as a cofactor.

Its subcellular location is the cell membrane. It carries out the reaction 4 Fe(II)-[cytochrome c] + O2 + 8 H(+)(in) = 4 Fe(III)-[cytochrome c] + 2 H2O + 4 H(+)(out). Functionally, subunits I and II form the functional core of the enzyme complex. Electrons originating in cytochrome c are transferred via heme a and Cu(A) to the binuclear center formed by heme a3 and Cu(B). The protein is Probable cytochrome c oxidase subunit 2 (ctaC) of Mycobacterium leprae (strain TN).